The primary structure comprises 240 residues: MAYASRFLSRSKQLQGGLVILQQQHAIPVRAFAKEAARPTFKGDEMLKGVFFDIKNKFQAAVDILRKEKITLDPEDPAAVKQYANVMKTIRQKADMFSESQRIKHDIDTETQDIPDARAYLLKLQEIRTRRGLTDELGAEAMMFEALEKVEKDIKKPLLRSDKKGMDLLVAEFEKGNKKLGIRKEDLPKYEENLELSMAKAQLDELKSDAVEAMESQKKKEEFQDEEMPDVKSLDIRNFI.

Residues 1–32 constitute a mitochondrion transit peptide; it reads MAYASRFLSRSKQLQGGLVILQQQHAIPVRAF. 2 stretches are compositionally biased toward basic and acidic residues: residues 210–222 and 229–240; these read AVEA…KKEE and PDVKSLDIRNFI. The segment at 210–240 is disordered; the sequence is AVEAMESQKKKEEFQDEEMPDVKSLDIRNFI.

Its subcellular location is the mitochondrion. It localises to the mitochondrion inner membrane. In terms of biological role, mitochondrial membrane ATP synthase (F(1)F(0) ATP synthase or Complex V) produces ATP from ADP in the presence of a proton gradient across the membrane which is generated by electron transport complexes of the respiratory chain. F-type ATPases consist of two structural domains, F(1) - containing the extramembraneous catalytic core and F(0) - containing the membrane proton channel, linked together by a central stalk and a peripheral stalk. During catalysis, ATP synthesis in the catalytic domain of F(1) is coupled via a rotary mechanism of the central stalk subunits to proton translocation. Part of the complex F(0) domain. The polypeptide is Probable ATP synthase 24 kDa subunit, mitochondrial (Arabidopsis thaliana (Mouse-ear cress)).